Consider the following 403-residue polypeptide: CCA-adding enzyme (403 aa).

Glycine 32 and arginine 35 together coordinate ATP. CTP contacts are provided by glycine 32 and arginine 35. Mg(2+) is bound by residues aspartate 45 and aspartate 47. Arginine 116, aspartate 159, arginine 162, arginine 165, and arginine 168 together coordinate ATP. The CTP site is built by arginine 116, aspartate 159, arginine 162, arginine 165, and arginine 168.

Belongs to the tRNA nucleotidyltransferase/poly(A) polymerase family. Bacterial CCA-adding enzyme type 3 subfamily. Homodimer. Mg(2+) serves as cofactor.

It carries out the reaction a tRNA precursor + 2 CTP + ATP = a tRNA with a 3' CCA end + 3 diphosphate. The catalysed reaction is a tRNA with a 3' CCA end + 2 CTP + ATP = a tRNA with a 3' CCACCA end + 3 diphosphate. Catalyzes the addition and repair of the essential 3'-terminal CCA sequence in tRNAs without using a nucleic acid template. Adds these three nucleotides in the order of C, C, and A to the tRNA nucleotide-73, using CTP and ATP as substrates and producing inorganic pyrophosphate. tRNA 3'-terminal CCA addition is required both for tRNA processing and repair. Also involved in tRNA surveillance by mediating tandem CCA addition to generate a CCACCA at the 3' terminus of unstable tRNAs. While stable tRNAs receive only 3'-terminal CCA, unstable tRNAs are marked with CCACCA and rapidly degraded. The protein is CCA-adding enzyme of Streptococcus uberis (strain ATCC BAA-854 / 0140J).